A 249-amino-acid chain; its full sequence is Type III pantothenate kinase (249 aa).

6–13 (DAGNSRIK) provides a ligand contact to ATP. Substrate-binding positions include Phe77 and 98-101 (GVDR). Asp100 functions as the Proton acceptor in the catalytic mechanism. Asp121 lines the K(+) pocket. Ser124 is a binding site for ATP. Residue Thr177 coordinates substrate.

Belongs to the type III pantothenate kinase family. In terms of assembly, homodimer. The cofactor is NH4(+). K(+) serves as cofactor.

The protein resides in the cytoplasm. The enzyme catalyses (R)-pantothenate + ATP = (R)-4'-phosphopantothenate + ADP + H(+). Its pathway is cofactor biosynthesis; coenzyme A biosynthesis; CoA from (R)-pantothenate: step 1/5. Catalyzes the phosphorylation of pantothenate (Pan), the first step in CoA biosynthesis. This is Type III pantothenate kinase from Teredinibacter turnerae (strain ATCC 39867 / T7901).